Reading from the N-terminus, the 457-residue chain is Cysteine--tRNA ligase (457 aa).

C31 is a binding site for Zn(2+). The 'HIGH' region motif lies at 33 to 43 (PTVYNYAHIGN). C211, H236, and E240 together coordinate Zn(2+). The short motif at 269 to 273 (KMSKS) is the 'KMSKS' region element. Residue K272 participates in ATP binding.

Belongs to the class-I aminoacyl-tRNA synthetase family. As to quaternary structure, monomer. It depends on Zn(2+) as a cofactor.

The protein localises to the cytoplasm. It carries out the reaction tRNA(Cys) + L-cysteine + ATP = L-cysteinyl-tRNA(Cys) + AMP + diphosphate. This is Cysteine--tRNA ligase from Xanthomonas campestris pv. campestris (strain ATCC 33913 / DSM 3586 / NCPPB 528 / LMG 568 / P 25).